Consider the following 474-residue polypeptide: MSPNELTYLAILLGSAPLGFLFKNGSPQVKQRGSAAVGVALTLITCHIHSLHSAITILGTWLIIKILPRSCHFPTLGWTFTYLLFFRTITYFDIPAPTPFTNAVQLLLTLKLVSLANEVQDFYRAKKQEVTSFSKPSAISTIPSIPSLREMFYYSYCYIGLMTGPFYRYKTYYDWLHQIDPASIPSWKPLVSRLKPAPVFGVLFLIASQYFPLDYVKTDEFYEQAFLYRLFYMVPTFFIFRMRFYVAWIFAECGCISAAFGAYPVSAKSRSGGGPTVEYAPLERNAEGAKVELEYDYETIKNIDCYGADFCVKVKDGMRYWNMSVQWWLAQYIYKNSPVKSLVFGSAWTMLVSAYWHGIHPGYYMSFLTIPLCLAAEGSMEAGLRRHVSDSGKMIFDWVHWFLKMRAYDYMCMGFVLLTFTDTYRYWQSIYFSVHVLAISLFLLGRVLALKSPRRPRNTKEEKAEAKQENRLQE.

Residues 1–5 lie on the Cytoplasmic side of the membrane; it reads MSPNE. A helical membrane pass occupies residues 6–22; the sequence is LTYLAILLGSAPLGFLF. Over 23 to 33 the chain is Lumenal; the sequence is KNGSPQVKQRG. Residues 34 to 57 traverse the membrane as a helical segment; it reads SAAVGVALTLITCHIHSLHSAITI. The Cytoplasmic portion of the chain corresponds to 58–73; that stretch reads LGTWLIIKILPRSCHF. The chain crosses the membrane as a helical span at residues 74 to 93; the sequence is PTLGWTFTYLLFFRTITYFD. Over 94-193 the chain is Lumenal; the sequence is IPAPTPFTNA…IPSWKPLVSR (100 aa). The helical transmembrane segment at 194-211 threads the bilayer; that stretch reads LKPAPVFGVLFLIASQYF. Topologically, residues 212–230 are cytoplasmic; that stretch reads PLDYVKTDEFYEQAFLYRL. The helical transmembrane segment at 231–260 threads the bilayer; the sequence is FYMVPTFFIFRMRFYVAWIFAECGCISAAF. The Lumenal segment spans residues 261 to 427; the sequence is GAYPVSAKSR…LTFTDTYRYW (167 aa). The N-linked (GlcNAc...) asparagine glycan is linked to N322. A helical transmembrane segment spans residues 428–448; that stretch reads QSIYFSVHVLAISLFLLGRVL. Residues 449–473 lie on the Cytoplasmic side of the membrane; sequence ALKSPRRPRNTKEEKAEAKQENRLQ.

This sequence belongs to the membrane-bound acyltransferase family.

It localises to the endoplasmic reticulum membrane. It carries out the reaction a 1-acyl-sn-glycero-3-phospho-(1D-myo-inositol) + (5Z,8Z,11Z,14Z)-eicosatetraenoyl-CoA = a 1-acyl-2-(5Z,8Z,11Z,14Z-eicosatetraenoyl)-sn-glycero-3-phospho-(1D-myo-inositol) + CoA. The catalysed reaction is (5Z,8Z,11Z,14Z)-eicosatetraenoyl-CoA + 1-hexadecanoyl-sn-glycero-3-phosphocholine = 1-hexadecanoyl-2-(5Z,8Z,11Z,14Z-eicosatetraenoyl)-sn-glycero-3-phosphocholine + CoA. It catalyses the reaction a 1-acyl-sn-glycero-3-phospho-(1D-myo-inositol) + an acyl-CoA = a 1,2-diacyl-sn-glycero-3-phospho-(1D-myo-inositol) + CoA. The enzyme catalyses 1-octadecanoyl-sn-glycero-3-phospho-(1D-myo-inositol) + (5Z,8Z,11Z,14Z)-eicosatetraenoyl-CoA = 1-octadecanoyl-2-(5Z,8Z,11Z,14Z-eicosatetraenoyl)-sn-glycero-3-phospho-(1D-myo-inositol) + CoA. Its pathway is lipid metabolism; phospholipid metabolism. In terms of biological role, acyltransferase which catalyzes the transfer of an acyl group from an acyl-CoA to a lysophosphatidylinositol (1-acylglycerophosphatidylinositol or LPI) leading to the production of a phosphatidylinositol (1,2-diacyl-sn-glycero-3-phosphoinositol or PI) and participates in the reacylation step of the phospholipid remodeling pathway also known as the Lands cycle. Prefers arachidonoyl-CoA as the acyl donor, thus contributing to the regulation of free levels arachidonic acid in cell. This Xenopus laevis (African clawed frog) protein is Membrane-bound acylglycerophosphatidylinositol O-acyltransferase mboat7 (mboat7).